Here is a 188-residue protein sequence, read N- to C-terminus: Threonylcarbamoyl-AMP synthase (188 aa).

The YrdC-like domain maps to 3–188 (QLHPSDIKDI…RSGKILRNGQ (186 aa)).

Belongs to the SUA5 family. TsaC subfamily.

The protein localises to the cytoplasm. The catalysed reaction is L-threonine + hydrogencarbonate + ATP = L-threonylcarbamoyladenylate + diphosphate + H2O. Functionally, required for the formation of a threonylcarbamoyl group on adenosine at position 37 (t(6)A37) in tRNAs that read codons beginning with adenine. Catalyzes the conversion of L-threonine, HCO(3)(-)/CO(2) and ATP to give threonylcarbamoyl-AMP (TC-AMP) as the acyladenylate intermediate, with the release of diphosphate. In Shewanella baltica (strain OS195), this protein is Threonylcarbamoyl-AMP synthase.